The chain runs to 295 residues: MELLSALSLDDLAASFSKLPVFPLFDVAYYIISILYLKYEPGAVDLSKRSPVASWLCAMLYCFGSYILADVLLGESPIHYFSNNANILLASAVWYLTFFCPLNIFYKIVSFLPVKLVLVGMKEVVRVRKIAMGIHHAHHHYHHGWVIMVLIGWVKGSGVALMSNLEQLLRGVWKPETNEILHMSFPTKASLYGAILFTLQQAHWLPISKAYLIFFFTLFMAVCKIYMTATHSHGSPFAIFESGICYVLFAAANGDHDDHGNHHHHHDDHDVSHSAGKSKEEHNEGTRKRKTKKAE.

The Lumenal portion of the chain corresponds to 1-18; that stretch reads MELLSALSLDDLAASFSK. A helical transmembrane segment spans residues 19–39; that stretch reads LPVFPLFDVAYYIISILYLKY. The Cytoplasmic segment spans residues 40 to 51; sequence EPGAVDLSKRSP. A helical transmembrane segment spans residues 52–72; that stretch reads VASWLCAMLYCFGSYILADVL. Residues 73–84 are Lumenal-facing; it reads LGESPIHYFSNN. Position 74 (Gly74) interacts with Ca(2+). A helical membrane pass occupies residues 85 to 105; sequence ANILLASAVWYLTFFCPLNIF. The Cytoplasmic portion of the chain corresponds to 106 to 144; sequence YKIVSFLPVKLVLVGMKEVVRVRKIAMGIHHAHHHYHHG. A 1,2-diacyl-sn-glycero-3-phospho-(1D-myo-inositol-4,5-bisphosphate)-binding residues include Lys122 and Arg126. The helical transmembrane segment at 145 to 165 threads the bilayer; that stretch reads WVIMVLIGWVKGSGVALMSNL. Residues 166-178 lie on the Lumenal side of the membrane; sequence EQLLRGVWKPETN. The chain crosses the membrane as a helical span at residues 179–199; that stretch reads EILHMSFPTKASLYGAILFTL. The Cytoplasmic portion of the chain corresponds to 200 to 201; sequence QQ. The helical transmembrane segment at 202 to 222 threads the bilayer; sequence AHWLPISKAYLIFFFTLFMAV. Topologically, residues 223-233 are lumenal; it reads CKIYMTATHSH. A helical transmembrane segment spans residues 234–254; the sequence is GSPFAIFESGICYVLFAAANG. Topologically, residues 255-295 are cytoplasmic; the sequence is DHDDHGNHHHHHDDHDVSHSAGKSKEEHNEGTRKRKTKKAE. The disordered stretch occupies residues 258–295; it reads DHGNHHHHHDDHDVSHSAGKSKEEHNEGTRKRKTKKAE. Over residues 267–286 the composition is skewed to basic and acidic residues; it reads DDHDVSHSAGKSKEEHNEGT.

Belongs to the TMEM38 family. Homotrimer; conformation seems to be controled by binding to diacylglycerol (DAG).

It localises to the sarcoplasmic reticulum membrane. It is found in the nucleus membrane. It carries out the reaction K(+)(in) = K(+)(out). Its activity is regulated as follows. Channel activity is activated by a change of voltage within the sarcoplasmic reticulum lumen and blocked by luminal high Ca(2+) levels. In terms of biological role, intracellular monovalent cation channel required for maintenance of rapid intracellular calcium release. Acts as a potassium counter-ion channel that functions in synchronization with calcium release from intracellular stores. Opened by a change of voltage within the sarcoplasmic reticulum lumen. This Xenopus laevis (African clawed frog) protein is Trimeric intracellular cation channel type A (tmem38a).